The sequence spans 943 residues: Translation initiation factor IF-2 (943 aa).

2 disordered regions span residues 96–229 (FIKR…ERRR) and 243–352 (AAPK…QRQQ). Low complexity predominate over residues 104–116 (DAPSDAAESAPSA). 2 stretches are compositionally biased toward basic and acidic residues: residues 120-163 (ELVR…EERA) and 171-229 (AEKK…ERRR). The span at 278–293 (ATGSGTGARAAAPSAP) shows a compositional bias: low complexity. A compositionally biased stretch (basic and acidic residues) spans 313–323 (TTKKKEIKTRG). Residues 443–612 (SRAPVVTVMG…LLQAEVLELK (170 aa)) enclose the tr-type G domain. Positions 452–459 (GHVDHGKT) are G1. 452–459 (GHVDHGKT) contacts GTP. The G2 stretch occupies residues 477–481 (GITQH). The tract at residues 498–501 (DTPG) is G3. Residues 498–502 (DTPGH) and 552–555 (TKAD) each bind GTP. Residues 552–555 (TKAD) form a G4 region. The segment at 588 to 590 (SSK) is G5.

The protein belongs to the TRAFAC class translation factor GTPase superfamily. Classic translation factor GTPase family. IF-2 subfamily.

It is found in the cytoplasm. One of the essential components for the initiation of protein synthesis. Protects formylmethionyl-tRNA from spontaneous hydrolysis and promotes its binding to the 30S ribosomal subunits. Also involved in the hydrolysis of GTP during the formation of the 70S ribosomal complex. The sequence is that of Translation initiation factor IF-2 from Acidovorax sp. (strain JS42).